Consider the following 166-residue polypeptide: Phosphopantetheine adenylyltransferase (166 aa).

A substrate-binding site is contributed by serine 11. Residues 11–12 and histidine 19 contribute to the ATP site; that span reads SF. Lysine 43, alanine 76, and arginine 90 together coordinate substrate. ATP contacts are provided by residues 91-93, glutamate 101, and 126-132; these read GLR and LQPVSSS.

The protein belongs to the bacterial CoaD family. As to quaternary structure, homohexamer. Mg(2+) serves as cofactor.

The protein localises to the cytoplasm. The catalysed reaction is (R)-4'-phosphopantetheine + ATP + H(+) = 3'-dephospho-CoA + diphosphate. The protein operates within cofactor biosynthesis; coenzyme A biosynthesis; CoA from (R)-pantothenate: step 4/5. Reversibly transfers an adenylyl group from ATP to 4'-phosphopantetheine, yielding dephospho-CoA (dPCoA) and pyrophosphate. This chain is Phosphopantetheine adenylyltransferase, found in Streptococcus equi subsp. equi (strain 4047).